The sequence spans 691 residues: Pentatricopeptide repeat-containing protein At5g27110 (691 aa).

16 PPR repeats span residues 38–68 (DVVL…FDIR), 70–104 (DVYI…SICV), 106–140 (DSFT…GYVC), 141–171 (DVVV…MPER), 172–206 (DVAS…GFEP), 207–241 (NSVS…GFEL), 242–272 (DEYV…MPRK), 273–307 (SLVA…GTRP), 308–342 (SQTT…VVNA), 343–373 (DIYV…TQKD), 374–408 (VAES…GVKP), 409–443 (DVVT…RLET), 444–474 (DELL…IPKK), 475–509 (DVVS…GLKP), 510–540 (DGVT…MRSK), and 546–576 (IIEH…TPET). A type E motif region spans residues 582–657 (LLSTLFSACC…KPGCSWIEMS (76 aa)). A type E(+) motif region spans residues 658 to 688 (DKVCHFFAEDRSHLRAENVYECLALLSGHME).

It belongs to the PPR family. PCMP-E subfamily.

The polypeptide is Pentatricopeptide repeat-containing protein At5g27110 (PCMP-E14) (Arabidopsis thaliana (Mouse-ear cress)).